The sequence spans 190 residues: Inosine triphosphate pyrophosphatase (190 aa).

Threonine 10 to lysine 15 is a binding site for ITP. Residue glutamate 40 coordinates Mg(2+). ITP-binding positions include lysine 52, aspartate 68–threonine 69, lysine 85, phenylalanine 144–aspartate 147, lysine 167, and histidine 172–arginine 173.

It belongs to the HAM1 NTPase family. Homodimer. Requires Mg(2+) as cofactor. The cofactor is Mn(2+).

It is found in the cytoplasm. It catalyses the reaction ITP + H2O = IMP + diphosphate + H(+). The catalysed reaction is dITP + H2O = dIMP + diphosphate + H(+). It carries out the reaction XTP + H2O = XMP + diphosphate + H(+). Its function is as follows. Pyrophosphatase that hydrolyzes non-canonical purine nucleotides such as inosine triphosphate (ITP), deoxyinosine triphosphate (dITP) or xanthosine 5'-triphosphate (XTP) to their respective monophosphate derivatives. The enzyme does not distinguish between the deoxy- and ribose forms. Probably excludes non-canonical purines from RNA and DNA precursor pools, thus preventing their incorporation into RNA and DNA and avoiding chromosomal lesions. In Culex quinquefasciatus (Southern house mosquito), this protein is Inosine triphosphate pyrophosphatase.